The sequence spans 418 residues: Serine hydroxymethyltransferase (418 aa).

Residues Leu-121 and 125–127 (GHL) each bind (6S)-5,6,7,8-tetrahydrofolate. Lys-230 bears the N6-(pyridoxal phosphate)lysine mark. 356–358 (SPF) contacts (6S)-5,6,7,8-tetrahydrofolate.

It belongs to the SHMT family. In terms of assembly, homodimer. It depends on pyridoxal 5'-phosphate as a cofactor.

It localises to the cytoplasm. It catalyses the reaction (6R)-5,10-methylene-5,6,7,8-tetrahydrofolate + glycine + H2O = (6S)-5,6,7,8-tetrahydrofolate + L-serine. The protein operates within one-carbon metabolism; tetrahydrofolate interconversion. Its pathway is amino-acid biosynthesis; glycine biosynthesis; glycine from L-serine: step 1/1. In terms of biological role, catalyzes the reversible interconversion of serine and glycine with tetrahydrofolate (THF) serving as the one-carbon carrier. This reaction serves as the major source of one-carbon groups required for the biosynthesis of purines, thymidylate, methionine, and other important biomolecules. Also exhibits THF-independent aldolase activity toward beta-hydroxyamino acids, producing glycine and aldehydes, via a retro-aldol mechanism. This chain is Serine hydroxymethyltransferase, found in Alteromonas mediterranea (strain DSM 17117 / CIP 110805 / LMG 28347 / Deep ecotype).